The sequence spans 172 residues: uncharacterized protein (172 aa).

The region spanning 3–171 (KKVAIILTNE…FNREIVNQLN (169 aa)) is the PfpI endopeptidase domain.

This sequence belongs to the peptidase C56 family.

This is an uncharacterized protein from Staphylococcus saprophyticus subsp. saprophyticus (strain ATCC 15305 / DSM 20229 / NCIMB 8711 / NCTC 7292 / S-41).